The sequence spans 317 residues: Putative methyltransferase YMR310C (317 aa).

Residue Ser-190 is modified to Phosphoserine.

Belongs to the class IV-like SAM-binding methyltransferase superfamily.

It localises to the nucleus. The chain is Putative methyltransferase YMR310C from Saccharomyces cerevisiae (strain ATCC 204508 / S288c) (Baker's yeast).